The sequence spans 232 residues: Protein TIFY 10c (232 aa).

The segment at 54 to 73 (PPAAGAGGAFRPPPTTMNLL) is disordered. In terms of domain architecture, Tify spans 114-149 (AGEKAQQLTIFYGGKVVVFENFPSTKVKDLLQIVST). The disordered stretch occupies residues 152–177 (GVDKNTGTAATQSLPRPAHNSLPDLP). The span at 156–165 (NTGTAATQSL) shows a compositional bias: polar residues. Positions 177–202 (PIARRNSLHRFLEKRKGRMNANAPYQ) match the Jas motif. Positions 179-186 (ARRNSLHR) match the Nuclear localization signal motif.

The protein belongs to the TIFY/JAZ family. In terms of assembly, interacts with BHLH148. Interacts with COI1B in a coronatine-dependent manner. Coronatine is an analog of jasmonoyl isoleucine (JA-Ile). Interacts with TIFY5/JAZ2, TIFY6B/JAZ4, TIFY9/JAZ5, TIFY11A, TIFY11D/JAZ12, TIFY11G/JAZ15 and NINJA1. Ubiquitinated. Increase in jasmonoyl isoleucine (JA-Ile) levels mediates its degradation via COI1B-mediated proteasome pathway.

It localises to the nucleus. The protein localises to the cytoplasm. It is found in the cytosol. Its function is as follows. Repressor of jasmonate (JA) responses. Acts as a repressor of JA-induced resistance to the bacterial blight pathogen Xanthomonas oryzae pv. oryzae (Xoo). Regulates JA-induced accumulation of linalool at the transcriptional level of linalool synthase gene LIS. Linalool is important for resistance to bacterial blight pathogen Xoo. The chain is Protein TIFY 10c from Oryza sativa subsp. japonica (Rice).